The sequence spans 1145 residues: Structure-specific endonuclease subunit SLX4 (1145 aa).

The tract at residues 48–108 is disordered; sequence ADIPVQPDPP…GKSKQQPSIS (61 aa). Residues 321–372 are a coiled coil; that stretch reads ERETQKCRQLRQQHELVYAELERYYGDPQKLEEEVMQELDELEKLVADNMIE. Residues 382–393 show a composition bias toward low complexity; sequence EAESSSTGSSPS. Disordered stretches follow at residues 382–442, 613–634, and 666–689; these read EAES…EDEP, QSSHQLGILTTPNDTEHSSSFS, and SAEKRVSPAASPYKQSDASVDLTQ. Positions 395 to 410 are enriched in basic and acidic residues; that stretch reads EPPDKRPKMTMEDKEN. Composition is skewed to polar residues over residues 411–430, 613–633, and 678–689; these read LQPTTSKASLTVPAQSTRCT, QSSHQLGILTTPNDTEHSSSF, and YKQSDASVDLTQ.

This sequence belongs to the SLX4 family. As to quaternary structure, forms a heterodimer with SLX1. Interacts with mei-9; catalytic subunit of the MEI-9-ERCC1 endonuclease.

It is found in the nucleus. In terms of biological role, regulatory subunit that interacts with and increases the activity of different structure-specific endonucleases. Has several distinct roles in protecting genome stability by resolving diverse forms of deleterious DNA structures originating from replication and recombination intermediates and from DNA damage. Component of the SLX1-SLX4 structure-specific endonuclease that resolves DNA secondary structures generated during DNA repair and recombination. Has endonuclease activity towards branched DNA substrates, introducing single-strand cuts in duplex DNA close to junctions with ss-DNA. Interacts with the structure-specific MEI-9-ERCC1 endonuclease to generate meiotic crossovers. The sequence is that of Structure-specific endonuclease subunit SLX4 (mus312) from Drosophila melanogaster (Fruit fly).